A 128-amino-acid polypeptide reads, in one-letter code: Holo-[acyl-carrier-protein] synthase (128 aa).

Asp8 and Glu60 together coordinate Mg(2+).

Belongs to the P-Pant transferase superfamily. AcpS family. Mg(2+) is required as a cofactor.

Its subcellular location is the cytoplasm. It carries out the reaction apo-[ACP] + CoA = holo-[ACP] + adenosine 3',5'-bisphosphate + H(+). In terms of biological role, transfers the 4'-phosphopantetheine moiety from coenzyme A to a Ser of acyl-carrier-protein. This Anaeromyxobacter dehalogenans (strain 2CP-C) protein is Holo-[acyl-carrier-protein] synthase.